The sequence spans 129 residues: Large ribosomal subunit protein bL12 (129 aa).

It belongs to the bacterial ribosomal protein bL12 family. Homodimer. Part of the ribosomal stalk of the 50S ribosomal subunit. Forms a multimeric L10(L12)X complex, where L10 forms an elongated spine to which 2 to 4 L12 dimers bind in a sequential fashion. Binds GTP-bound translation factors.

In terms of biological role, forms part of the ribosomal stalk which helps the ribosome interact with GTP-bound translation factors. Is thus essential for accurate translation. The chain is Large ribosomal subunit protein bL12 from Fervidobacterium nodosum (strain ATCC 35602 / DSM 5306 / Rt17-B1).